The primary structure comprises 617 residues: Diacylglycerol O-acyltransferase 1 (617 aa).

Disordered regions lie at residues 1–52 (MEPI…ETER) and 95–186 (RNTN…PKQE). Over residues 7–17 (SNGNKNNSMDK) the composition is skewed to polar residues. 2 stretches are compositionally biased toward low complexity: residues 18–34 (QPQQPQQPQQQQQQQQQ) and 96–105 (NTNNNNQNNT). The span at 106-140 (SPTFSSANGKQSNLTQRKINTQIQSKQPTNNNVQP) shows a compositional bias: polar residues. Low complexity predominate over residues 160 to 177 (QNNNGNNNNNNNNNNNNN). Transmembrane regions (helical) follow at residues 217 to 237 (LLLILLITASFRLVILNHLLY), 254 to 274 (WPGVMISLMINLFIIAAYLIE), 306 to 326 (IIAFSPNPASGIIVMILICTF), 399 to 419 (IVEALSLSLLILWMVNQYMLP), and 449 to 469 (YVWLLGFYVFFHLYLNIVAEI). Positions 477 to 483 (FYRDWWN) match the FYXDWWN motif motif. 3 helical membrane-spanning segments follow: residues 520–540 (GYFMCFFVSAIFHELVISIPF), 545–565 (LWGFFGIMSQMVLIALTKNLM), and 570–590 (LGNVIFWISIVLGQPLVVLLY). His-532 is a catalytic residue.

The protein belongs to the membrane-bound acyltransferase family. Sterol o-acyltransferase subfamily.

Its subcellular location is the endoplasmic reticulum membrane. It carries out the reaction an acyl-CoA + a 1,2-diacyl-sn-glycerol = a triacyl-sn-glycerol + CoA. It catalyses the reaction all-trans-retinol + an acyl-CoA = an all-trans-retinyl ester + CoA. The catalysed reaction is 2-(9Z-octadecenoyl)-glycerol + (9Z)-octadecenoyl-CoA = 1,2-di-(9Z-octadecenoyl)-sn-glycerol + CoA. The enzyme catalyses 1,2-di-(9Z-octadecenoyl)-sn-glycerol + (9Z)-octadecenoyl-CoA = 1,2,3-tri-(9Z-octadecenoyl)-glycerol + CoA. It carries out the reaction all-trans-retinol + hexadecanoyl-CoA = all-trans-retinyl hexadecanoate + CoA. It catalyses the reaction 1-O-(9Z-octadecenyl)-glycerol + (9Z)-octadecenoyl-CoA = 1-O-(9Z-octadecyl)-3-(9Z-octadecenoyl)-glycerol + CoA. The catalysed reaction is 1-O-(9Z-octadecyl)-3-(9Z-octadecenoyl)-glycerol + (9Z)-octadecenoyl-CoA = 1-O-(9Z-octadecenyl)-2,3-di-(9Z-octadecenoyl)glycerol + CoA. The enzyme catalyses 1-(9Z-octadecenoyl)-glycerol + (9Z)-octadecenoyl-CoA = 1,2-di-(9Z-octadecenoyl)-glycerol + CoA. It carries out the reaction 1,2-di-(9Z-octadecenoyl)-glycerol + (9Z)-octadecenoate + H(+) = 1,2,3-tri-(9Z-octadecenoyl)-glycerol + H2O. It catalyses the reaction 1-octadecanoyl-2-(5Z,8Z,11Z,14Z-eicosatetraenoyl)-sn-glycerol + (9Z)-octadecenoyl-CoA = 1-octadecanoyl-2-(5Z,8Z,11Z,14Z)-eicosatetraenoyl-3-(9Z)-octadecenoyl-sn-glycerol + CoA. The catalysed reaction is hexadecane-1,2-diol + 2 hexadecanoyl-CoA = 1,2-O,O-dihexadecanoyl-1,2-hexadecanediol + 2 CoA. The enzyme catalyses hexadecane-1,2-diol + hexadecanoyl-CoA = 2-hydroxyhexadecyl hexadecanoate + CoA. It carries out the reaction 2-(9Z-octadecenoyl)-glycerol + hexadecanoyl-CoA = 1-hexadecanoyl-2-(9Z-octadecenoyl)-sn-glycerol + CoA. It catalyses the reaction 1,2-di-(9Z-octadecenoyl)-sn-glycerol + hexadecanoyl-CoA = 1,2-di-(9Z)-octadecenoyl-3-hexadecanoyl-sn-glycerol + CoA. The catalysed reaction is hexadecan-1-ol + hexadecanoyl-CoA = hexadecanyl hexadecanoate + CoA. The enzyme catalyses 13-cis-retinol + hexadecanoyl-CoA = 13-cis-retinyl hexadecanoate + CoA. It carries out the reaction 1,3-di-(9Z-octadecenoyl)-glycerol + (9Z)-octadecenoyl-CoA = 1,2,3-tri-(9Z-octadecenoyl)-glycerol + CoA. It catalyses the reaction 2,3-di-(9Z)-octadecenoyl-sn-glycerol + (9Z)-octadecenoyl-CoA = 1,2,3-tri-(9Z-octadecenoyl)-glycerol + CoA. The protein operates within lipid metabolism; glycerolipid metabolism. Functionally, catalyzes the terminal and only committed step in triacylglycerol synthesis by using diacylglycerol and fatty acyl CoA as substrates. The chain is Diacylglycerol O-acyltransferase 1 (dgat1) from Dictyostelium discoideum (Social amoeba).